Here is a 351-residue protein sequence, read N- to C-terminus: Ion-translocating oxidoreductase complex subunit D (351 aa).

3 helical membrane passes run 37-57 (YFFG…AILA), 88-108 (AIPP…AIVI), and 123-143 (PAMA…TTWL). FMN phosphoryl threonine is present on threonine 187. 4 consecutive transmembrane segments (helical) span residues 214-234 (FAGL…LFLL), 241-261 (WHIP…FAVF), 270-290 (IFNL…TDPV), and 300-317 (LYYG…RSWG).

It belongs to the NqrB/RnfD family. The complex is composed of six subunits: RnfA, RnfB, RnfC, RnfD, RnfE and RnfG. The cofactor is FMN.

It is found in the cell inner membrane. Its function is as follows. Part of a membrane-bound complex that couples electron transfer with translocation of ions across the membrane. The polypeptide is Ion-translocating oxidoreductase complex subunit D (Aliivibrio salmonicida (strain LFI1238) (Vibrio salmonicida (strain LFI1238))).